Reading from the N-terminus, the 415-residue chain is MEPLRVLELYSGIGGMHHALRESHIPAHVVAAIDVNTVANEVYKHNFPHTHLLSKTIEGISLEDFDKLSFNMILMSPPCQPFTRIGLQGDMTDPRTTSFLYILDILPRLQKLPKYILLENVKGFEVSSTRGLLIQTIEACGFQYQEFLLSPSSLGIPNSRLRYFLIAKLQSEPFPFQAPGQILMEFPKIVTVEPQKYAVVEESQPRVQRTGPRICAESSSTQSSGKDTILFKLETVEERDRKHQQDSDLSVQMLKDFLEDGDTDEYLLPPKLLLRYALLLDIVKPTSRRSMCFTKGYGSYIEGTGSVLQAAEDAQIENIYKSLPDLPPEEKIAKLSMLKLRYFTPKEIANLQGFPPEFGFPEKTTVKQRYRLLGNSLNVHVVAKLLTVLCEGFGNASESCHKMPLILDSNSKILS.

The 393-residue stretch at 4 to 396 (LRVLELYSGI…TVLCEGFGNA (393 aa)) folds into the SAM-dependent MTase C5-type domain. Residues 13–15 (IGG), Asp-34, 57–58 (IE), and Ser-76 contribute to the S-adenosyl-L-methionine site. Cys-79 is an active-site residue. Residue Ser-376 coordinates S-adenosyl-L-methionine.

The protein belongs to the class I-like SAM-binding methyltransferase superfamily. C5-methyltransferase family. Highly expressed in thymus, testis, and at much lower levels in spleen, lung, brain, heart, kidney, liver, skeletal muscle and embryonic stem cells.

It localises to the cytoplasm. It catalyses the reaction cytidine(38) in tRNA + S-adenosyl-L-methionine = 5-methylcytidine(38) in tRNA + S-adenosyl-L-homocysteine + H(+). Its function is as follows. Specifically methylates cytosine 38 in the anticodon loop of tRNA(Asp). Has higher activity on tRNA(Asp) modified with queuosine at position 34. The chain is tRNA (cytosine(38)-C(5))-methyltransferase (Trdmt1) from Mus musculus (Mouse).